The sequence spans 544 residues: MNRIKILPETIVGKISAGEVVERPASVVKELIENSIDAGANSISVYIKEFGIAEIKVIDDGEGIPSDDVILAFQRHATSKIKDEKDLQRISSLGFRGEALYSIANVSKLKIITQYKDEDTGTEVYLTGGNLVSQKPVVTKGTTVEIRDLFFNTPVRRKFLKSSYTEKAHIIETVQNYCLAYPEISFSLFIDREEVLNIPQVKTLYDRISQVFGLEFTEKLKFKTISKDNYKIELFLGGEELLRKSKGRQLIFVNRRPVKDFSIVNTIYKAFHINENHPQFFIFINLPPEDVDFNVHPAKKEVRFREPQIIHQLIFRMSEYQVKSSMIAEETNQWKVNADLSSISQISAFYTESIFNKEEIFHFFSIGDAIVVIQRVDGIVFLDFHAAHERVNFEKILNKMSEQIVKLTFPHVINLNPQDYVLIKENLHILNELGIEAEDFGENSIVIRALPEIIKYIDIAGMIENIALTLKEGTSTPDFIEIKRKIAATIACHSSLRANEKINHFEIKALLQELERTSDPEHCPHGRPVRKFISLDEIKKWFLR.

The protein belongs to the DNA mismatch repair MutL/HexB family.

Functionally, this protein is involved in the repair of mismatches in DNA. It is required for dam-dependent methyl-directed DNA mismatch repair. May act as a 'molecular matchmaker', a protein that promotes the formation of a stable complex between two or more DNA-binding proteins in an ATP-dependent manner without itself being part of a final effector complex. In Thermodesulfovibrio yellowstonii (strain ATCC 51303 / DSM 11347 / YP87), this protein is DNA mismatch repair protein MutL.